Here is a 214-residue protein sequence, read N- to C-terminus: Probable transaldolase (214 aa).

Lys83 acts as the Schiff-base intermediate with substrate in catalysis.

It belongs to the transaldolase family. Type 3B subfamily.

Its subcellular location is the cytoplasm. It carries out the reaction D-sedoheptulose 7-phosphate + D-glyceraldehyde 3-phosphate = D-erythrose 4-phosphate + beta-D-fructose 6-phosphate. Its pathway is carbohydrate degradation; pentose phosphate pathway; D-glyceraldehyde 3-phosphate and beta-D-fructose 6-phosphate from D-ribose 5-phosphate and D-xylulose 5-phosphate (non-oxidative stage): step 2/3. In terms of biological role, transaldolase is important for the balance of metabolites in the pentose-phosphate pathway. In Leptospira biflexa serovar Patoc (strain Patoc 1 / Ames), this protein is Probable transaldolase.